Consider the following 230-residue polypeptide: Lipoprotein-releasing system ATP-binding protein LolD (230 aa).

One can recognise an ABC transporter domain in the interval 6 to 230; sequence LQASNLEKEY…GHFILPSETL (225 aa). 42–49 provides a ligand contact to ATP; sequence GSSGSGKS.

Belongs to the ABC transporter superfamily. Lipoprotein translocase (TC 3.A.1.125) family. The complex is composed of two ATP-binding proteins (LolD) and two transmembrane proteins (LolC and LolE).

The protein localises to the cell inner membrane. Part of the ABC transporter complex LolCDE involved in the translocation of mature outer membrane-directed lipoproteins, from the inner membrane to the periplasmic chaperone, LolA. Responsible for the formation of the LolA-lipoprotein complex in an ATP-dependent manner. The polypeptide is Lipoprotein-releasing system ATP-binding protein LolD (Hydrogenovibrio crunogenus (strain DSM 25203 / XCL-2) (Thiomicrospira crunogena)).